The chain runs to 195 residues: BH3-interacting domain death agonist (195 aa).

The residue at position 1 (Met1) is an N-acetylmethionine. The span at Thr58 to Gln69 shows a compositional bias: polar residues. The disordered stretch occupies residues Thr58–Glu77. At Ser78 the chain carries Phosphoserine. Positions Ala87 to Asn100 match the BH3 motif.

In terms of assembly, forms heterodimers either with the pro-apoptotic protein BAX or the anti-apoptotic protein BCL2. Interacts with PLEKHN1. Interacts with ITCH. Interacts with MTCH2. Post-translationally, TNF-alpha induces caspase-mediated cleavage into a major p15 and minor p13 and p11 products. Cleaved by CASP6 into a major p15 and minor p13 products, leading to release of cytochrome c and subsequent nonalcoholic steatohepatitis. Ubiquitinated by ITCH; ubiquitination results in proteasome-dependent degradation.

The protein resides in the cytoplasm. Its subcellular location is the mitochondrion membrane. The protein localises to the mitochondrion outer membrane. Its function is as follows. Induces caspases and apoptosis. Counters the protective effect of BCL2. Functionally, induces caspase activation and apoptosis. Allows the release of cytochrome c. The protein is BH3-interacting domain death agonist (Bid) of Mus musculus (Mouse).